A 95-amino-acid polypeptide reads, in one-letter code: Ascorbate-specific PTS system EIIB component (95 aa).

The PTS EIIB type-2 domain maps to 1-95; sequence MENKNLHIIA…EIKQALSKVL (95 aa). Cys12 acts as the Phosphocysteine intermediate in catalysis. Cys12 is subject to Phosphocysteine.

Its subcellular location is the cytoplasm. It catalyses the reaction N(pros)-phospho-L-histidyl-[protein] + L-ascorbate(out) = L-ascorbate 6-phosphate(in) + L-histidyl-[protein]. The phosphoenolpyruvate-dependent sugar phosphotransferase system (sugar PTS), a major carbohydrate active transport system, catalyzes the phosphorylation of incoming sugar substrates concomitantly with their translocation across the cell membrane. The enzyme II UlaABC PTS system is involved in ascorbate transport. The chain is Ascorbate-specific PTS system EIIB component (ulaB) from Mycoplasma pneumoniae (strain ATCC 29342 / M129 / Subtype 1) (Mycoplasmoides pneumoniae).